The chain runs to 410 residues: MKKEVVVIGGGIVGLSCAYSMHKLGHKVCVIEKSDGANGTSFGNAGLISAFKKAPLSCPGVVLDTLKLMLKNQAPLKFHFGLNLKLYQWILKFVKSANAKSTHRTMALFERYGWLSVDIYHQMLKDGMDFWYKEDGLLMIYTLEESFEKKLKTCDDSGAYKILSAKETKEYMPIVNDNICGSVLLTENAHVDPGEVMHSLQEYLQNAGVEFLYNEEVIDFEFKNNLIEGVITHKEKIQAETIILATGANPTLIKKTKNDFLMMGAKGYSITFKMPEELKPKTSSLFADIFMAMTPRRDTVRITSKLELNTNNALIDKEQIANMKKNLAAFTQPFEMKDAIEWCGFRPLTPNDIPYLGYDKRYKNLIHATGLGWLGITFGPAIGKIIANLSQDGANEKNADIMLFSAFFRD.

FAD is bound at residue 9 to 14; it reads GGGIVG.

This sequence belongs to the DadA oxidoreductase family. It depends on FAD as a cofactor.

The protein localises to the cell inner membrane. It carries out the reaction a D-alpha-amino acid + a quinone + H2O = a 2-oxocarboxylate + a quinol + NH4(+). Activity is markedly inhibited by benzoate, and moderately by SH reagents such as p-hydroxymercuribenzoate, iodoacetamide, and iodoacetate. Its function is as follows. Catalyzes the oxidative deamination of D-amino acids. Has broad substrate specificity; is mostly active on D-proline, and to a lesser extent, on several other D-amino acids such as D-alanine, D-phenylalanine and D-serine. Mediates electron transport from D-proline to coenzyme Q1 in vitro, and is involved in the electron transport chain from D-proline to the c-type cytochrome in vivo. The polypeptide is D-amino acid dehydrogenase (Helicobacter pylori (Campylobacter pylori)).